Here is a 370-residue protein sequence, read N- to C-terminus: Mesoderm posterior protein 2 (370 aa).

Disordered stretches follow at residues 51–89 (PSQP…EREK), 231–265 (SLER…HWTQ), and 325–350 (TSED…GLQL). Over residues 57–77 (PARSTRTTQATAPRRTRPAPA) the composition is skewed to low complexity. One can recognise a bHLH domain in the interval 79–133 (GQRQSASEREKLRMRTLARALQELRRFLPPSVAPAGQSLTKIETLRLAIRYIGHL). Over residues 325–334 (TSEDQGSSPA) the composition is skewed to polar residues. The may contain a degradation domain stretch occupies residues 326–330 (SEDQG).

In terms of processing, degraded by the proteasome. Phosphorylated.

The protein localises to the nucleus. In terms of biological role, transcription factor with important role in somitogenesis. Defines the rostrocaudal patterning of the somite by participating in distinct Notch pathways. Also regulates the FGF signaling pathway. Specifies the rostral half of the somites. Generates rostro-caudal polarity of somites by down-regulating in the presumptive rostral domain DLL1, a Notch ligand. Participates in the segment border formation by activating in the anterior presomitic mesoderm LFNG, a negative regulator of DLL1-Notch signaling. Acts as a strong suppressor of Notch activity. Together with MESP1 is involved in the epithelialization of somitic mesoderm and in the development of cardiac mesoderm. May play a role with Tcf15 in the differentiation of myotomal and sclerotomal cells by regulating Pax family genes. Also controls the expression of the protocadherin PCDH8/PAPC, EPHA4, RIPPLY2, NOTCH2, FGFR1, and CER1. Binds to the E-boxes within the EPH4A and RIPPLY2 enhancers. This chain is Mesoderm posterior protein 2 (Mesp2), found in Mus musculus (Mouse).